The primary structure comprises 980 residues: Valine--tRNA ligase (980 aa).

The 'HIGH' region signature appears at 43 to 53 (PNVTGTLHMGH). The 'KMSKS' region signature appears at 586-590 (KMSKS). An ATP-binding site is contributed by K589. The stretch at 914 to 978 (LVDMDAERTR…QLTGLREQRA (65 aa)) forms a coiled coil.

Belongs to the class-I aminoacyl-tRNA synthetase family. ValS type 1 subfamily. Monomer.

The protein resides in the cytoplasm. The catalysed reaction is tRNA(Val) + L-valine + ATP = L-valyl-tRNA(Val) + AMP + diphosphate. Its function is as follows. Catalyzes the attachment of valine to tRNA(Val). As ValRS can inadvertently accommodate and process structurally similar amino acids such as threonine, to avoid such errors, it has a 'posttransfer' editing activity that hydrolyzes mischarged Thr-tRNA(Val) in a tRNA-dependent manner. This chain is Valine--tRNA ligase, found in Xanthomonas euvesicatoria pv. vesicatoria (strain 85-10) (Xanthomonas campestris pv. vesicatoria).